The following is a 244-amino-acid chain: Small ribosomal subunit protein eS4 (244 aa).

The S4 RNA-binding domain occupies 43–106; sequence LPLLLVVRDV…DENYLVLFDE (64 aa).

The protein belongs to the eukaryotic ribosomal protein eS4 family.

The chain is Small ribosomal subunit protein eS4 from Methanococcus maripaludis (strain C5 / ATCC BAA-1333).